The following is a 101-amino-acid chain: uncharacterized protein (101 aa).

This is an uncharacterized protein from Neurospora crassa (strain ATCC 24698 / 74-OR23-1A / CBS 708.71 / DSM 1257 / FGSC 987).